The sequence spans 681 residues: MPKKKEDSQKTLSEKEAKGLIAKLSDEIRHHQYLYYVKNDPKISDFDFDQLFRRLQDLEEEFPQFKDLASPTLVVGSDLDKDFEKFQHKLPVLSLINTYNDNELLEWVNKTDPEGLYSVEWKIDGASIVLYYENGILKNGVTRGSGGIGDDVTDNIRTIRNIPLRLPEPITVYLRGEVFMTFKDFEEFNALSSGKYANPRNLSAGSIKQKNSSDTAKRPLRIFTYDATFPNMEKKFKTHQEIFSKLEKLTFPVPPNTAFVSGSKIAKTIQEFKKQKDSLGFPTDGLVIKLNDISKRDALGYTSHSPRWARAYKFDAIMKESKIVDITYAVGRTGKITPRAEIEPISLAGTTVTFATLHNQDYIDELGVGIGAIVRVAKRGEIIPAVEEVVTPGKEVFKIPDRCPSCNTQTIKKESLVDLFCPNPDCPDRVKNGIIFYCQRKQMDIEGLGDKQIEFLYDHDYIKSIADLYDLKDQKEKLMEEEGFGEKSVNIILKGIEQSKQKDFRFLLPSLGLSELGHKVTELLIEHGIDSIDEILSIAKDQKKIESLLEIPGIGPSTIQAFQENFSDKRILKLIERLKKAGLKMKADPIQVADQQPFAGQSWCVTGSFENFQPRDKAMDLIVYYGGRKVSAVSSKTTHLLAGPGAGSKLEKANELGVSVYDEKQFLDLLKSLKIDFKNLI.

NAD(+)-binding positions include 45–49 (DFDFD), 94–95 (SL), and Glu-120. The N6-AMP-lysine intermediate role is filled by Lys-122. 4 residues coordinate NAD(+): Arg-143, Glu-177, Lys-289, and Lys-313. Zn(2+)-binding residues include Cys-403, Cys-406, Cys-421, and Cys-426. One can recognise a BRCT domain in the interval 593 to 681 (ADQQPFAGQS…SLKIDFKNLI (89 aa)).

Belongs to the NAD-dependent DNA ligase family. LigA subfamily. Requires Mg(2+) as cofactor. It depends on Mn(2+) as a cofactor.

It carries out the reaction NAD(+) + (deoxyribonucleotide)n-3'-hydroxyl + 5'-phospho-(deoxyribonucleotide)m = (deoxyribonucleotide)n+m + AMP + beta-nicotinamide D-nucleotide.. Its function is as follows. DNA ligase that catalyzes the formation of phosphodiester linkages between 5'-phosphoryl and 3'-hydroxyl groups in double-stranded DNA using NAD as a coenzyme and as the energy source for the reaction. It is essential for DNA replication and repair of damaged DNA. The protein is DNA ligase of Leptospira interrogans serogroup Icterohaemorrhagiae serovar copenhageni (strain Fiocruz L1-130).